The primary structure comprises 370 residues: Selenide, water dikinase 2 (370 aa).

U24 is an active-site residue. Residue U24 is a non-standard amino acid, selenocysteine. ATP contacts are provided by residues K27, 55–57 (GMD), D76, and D99. D57 is a binding site for Mg(2+). D99 and D258 together coordinate Mg(2+).

The protein belongs to the selenophosphate synthase 1 family. Class I subfamily. In terms of assembly, homodimer. Requires Mg(2+) as cofactor. As to expression, first expressed in the midgut anlagen with subsequent expression in a variety of tissues including the gut and nervous system.

The catalysed reaction is hydrogenselenide + ATP + H2O = selenophosphate + AMP + phosphate + 2 H(+). Functionally, synthesizes selenophosphate from selenide and ATP. The sequence is that of Selenide, water dikinase 2 (Sps2) from Drosophila melanogaster (Fruit fly).